The chain runs to 103 residues: Major carboxysome shell protein CsoS1 (103 aa).

Residues 9-94 (ALGMIETRGL…PHREVEPALG (86 aa)) form the BMC domain.

Belongs to the bacterial microcompartments protein family. CsoS1 subfamily. Homohexamer with a small central pore. A CsoS1-CsoS1D-CsoS2 complex can be isolated following expression in E.coli. Forms a CsoS2-CsoS1-RuBisCO complex.

Its subcellular location is the carboxysome. In terms of biological role, the major shell protein of the carboxysome, a polyhedral inclusion where RuBisCO (ribulose bisphosphate carboxylase, ccbL-ccbS) is sequestered. Assembles into hexamers which make sheets that form the facets of the polyhedral carboxysome. There are estimated to be 538 CsoS1 hexamers per carboxysome; note this number includes the probable carboxysome shell vertex proteins CsoS4A and CsoS4B. The polypeptide is Major carboxysome shell protein CsoS1 (Prochlorococcus marinus subsp. pastoris (strain CCMP1986 / NIES-2087 / MED4)).